A 68-amino-acid chain; its full sequence is Conotoxin Cal14.13c (68 aa).

The signal sequence occupies residues 1 to 20; sequence MKLCVVXVLLMLAMPFNGGE. A propeptide spanning residues 21–68 is cleaved from the precursor; sequence ASRFFNQHARSQRSGMKTRGIWCDPPCPEGETCRGGECSDEFNGDLGG. Leu66 bears the Leucine amide mark.

Contains 2 disulfide bonds. Expressed by the venom duct.

Its subcellular location is the secreted. Functionally, probable neurotoxin with unknown target. Possibly targets ion channels. This Californiconus californicus (California cone) protein is Conotoxin Cal14.13c.